The sequence spans 399 residues: Endonuclease III homolog 1 (399 aa).

The N-terminal 26 residues, 1–26 (MQKISKYSSMAILRKRPLVKTETGPE), are a transit peptide targeting the mitochondrion. The Bipartite nuclear localization signal motif lies at 14-37 (RKRPLVKTETGPESELLPEKRTKI). Residue Lys194 forms a Glycyl lysine isopeptide (Lys-Gly) (interchain with G-Cter in SUMO) linkage. The region spanning 223–247 (FSSDVPATINELLGLPGVGPKMAYL) is the HhH domain. Catalysis depends on Lys243, which acts as the Nucleophile; for N-glycosylase activity.

Belongs to the Nth/MutY family. Monosumoylated. Sumoylation is associated with targeting of NTG1 to nuclei containing oxidative DNA damage.

It is found in the nucleus. Its subcellular location is the mitochondrion. The catalysed reaction is 2'-deoxyribonucleotide-(2'-deoxyribose 5'-phosphate)-2'-deoxyribonucleotide-DNA = a 3'-end 2'-deoxyribonucleotide-(2,3-dehydro-2,3-deoxyribose 5'-phosphate)-DNA + a 5'-end 5'-phospho-2'-deoxyribonucleoside-DNA + H(+). Its function is as follows. Bifunctional DNA N-glycosylase with associated apurinic/apyrimidinic (AP) lyase function that catalyzes the first step in base excision repair (BER), the primary repair pathway for the repair of oxidative DNA damage. The DNA N-glycosylase activity releases the damaged DNA base from DNA by cleaving the N-glycosidic bond, leaving an AP site. The AP-lyase activity cleaves the phosphodiester bond 3' to the AP site by a beta-elimination. Primarily recognizes and repairs oxidative base damage of pyrimidines, but also purine-derived lesions, alkylation damage and cytosine photoproducts generated by UV irradiation as well as abasic sites. Also has 8-oxoguanine DNA glycosylase activity. The AP lyase can incise AP sites opposite all four bases. May also play a role in the regulation of mtDNA copy number by introducing a double-stranded break (DSB) at the mtDNA replication origin ori5, initiating the rolling-circle mtDNA replication. In Saccharomyces cerevisiae (strain ATCC 204508 / S288c) (Baker's yeast), this protein is Endonuclease III homolog 1.